A 357-amino-acid chain; its full sequence is Protein-glutamate methylesterase/protein-glutamine glutaminase (357 aa).

In terms of domain architecture, Response regulatory spans 3-120 (RVIVVDDSAF…LASMDLAALS (118 aa)). 4-aspartylphosphate is present on Asp-54. Positions 165–357 (ERSRRDIIAI…AERVASALYK (193 aa)) constitute a CheB-type methylesterase domain. Catalysis depends on residues Ser-177, His-204, and Asp-300.

This sequence belongs to the CheB family. In terms of processing, phosphorylated by CheA. Phosphorylation of the N-terminal regulatory domain activates the methylesterase activity.

The protein localises to the cytoplasm. It carries out the reaction [protein]-L-glutamate 5-O-methyl ester + H2O = L-glutamyl-[protein] + methanol + H(+). The enzyme catalyses L-glutaminyl-[protein] + H2O = L-glutamyl-[protein] + NH4(+). Involved in chemotaxis. Part of a chemotaxis signal transduction system that modulates chemotaxis in response to various stimuli. Catalyzes the demethylation of specific methylglutamate residues introduced into the chemoreceptors (methyl-accepting chemotaxis proteins or MCP) by CheR. Also mediates the irreversible deamidation of specific glutamine residues to glutamic acid. This Lawsonia intracellularis (strain PHE/MN1-00) protein is Protein-glutamate methylesterase/protein-glutamine glutaminase.